We begin with the raw amino-acid sequence, 178 residues long: MNLKAKILDDKAMQRTLTRIAHEIIEKNKGIDDIVLVGIKRRGVPIADRIADIIEEIEGSKVKLGKVDITLYRDDLSTVSSQPIVKDEEVYEDVKDKVVILVDDVLYTGRTCRAAIEAIMHRGRPKMIQLAVLIDRGHRELPIRADYVGKNVPTSKSELISVNVKGIDEEDSVNIYEL.

Substrate is bound by residues 41–42 (RR), 103–111 (DDVLYTGRT), and Arg-136. The PRPP-binding motif lies at 99-111 (VILVDDVLYTGRT).

It belongs to the purine/pyrimidine phosphoribosyltransferase family. PyrR subfamily. In terms of assembly, homodimer and homohexamer; in equilibrium.

The enzyme catalyses UMP + diphosphate = 5-phospho-alpha-D-ribose 1-diphosphate + uracil. In terms of biological role, regulates transcriptional attenuation of the pyrimidine nucleotide (pyr) operon by binding in a uridine-dependent manner to specific sites on pyr mRNA. This disrupts an antiterminator hairpin in the RNA and favors formation of a downstream transcription terminator, leading to a reduced expression of downstream genes. Its function is as follows. Also displays a weak uracil phosphoribosyltransferase activity which is not physiologically significant. This Clostridium acetobutylicum (strain ATCC 824 / DSM 792 / JCM 1419 / IAM 19013 / LMG 5710 / NBRC 13948 / NRRL B-527 / VKM B-1787 / 2291 / W) protein is Bifunctional protein PyrR.